Reading from the N-terminus, the 141-residue chain is uncharacterized protein (141 aa).

Residues 1–17 (MNKSESENDSEYHKEYS) show a composition bias toward basic and acidic residues. Residues 1–24 (MNKSESENDSEYHKEYSESSDPED) are disordered. Residues 52-115 (IQNLNNNVKE…QMLFEKMRDM (64 aa)) are a coiled coil.

This is an uncharacterized protein from Acanthamoeba polyphaga (Amoeba).